The chain runs to 140 residues: Putative membrane protein ORF7 (140 aa).

Residues 44–60 (TCAVSFFALFMLIIWVL) form a helical membrane-spanning segment. The disordered stretch occupies residues 66–118 (PEGSTTRGTDAHTQTEGSTTRGTDAHTQTEGSRDQGSMTPEADDLTRPPLGHG). Positions 68-103 (GSTTRGTDAHTQTEGSTTRGTDAHTQTEGSRDQGSM) are enriched in polar residues.

The protein localises to the membrane. The sequence is that of Putative membrane protein ORF7 (ORF7) from Ictalurid herpesvirus 1 (strain Auburn) (IcHV-1).